A 400-amino-acid polypeptide reads, in one-letter code: Acetate kinase (400 aa).

Residue N10 coordinates Mg(2+). K17 contributes to the ATP binding site. R91 contributes to the substrate binding site. The active-site Proton donor/acceptor is the D150. ATP-binding positions include 210-214, 285-287, and 333-337; these read HLGNG, DCR, and GIGEN. E387 is a binding site for Mg(2+).

It belongs to the acetokinase family. As to quaternary structure, homodimer. Mg(2+) is required as a cofactor. The cofactor is Mn(2+).

The protein resides in the cytoplasm. It catalyses the reaction acetate + ATP = acetyl phosphate + ADP. The protein operates within metabolic intermediate biosynthesis; acetyl-CoA biosynthesis; acetyl-CoA from acetate: step 1/2. Functionally, catalyzes the formation of acetyl phosphate from acetate and ATP. Can also catalyze the reverse reaction. The chain is Acetate kinase from Yersinia pseudotuberculosis serotype IB (strain PB1/+).